A 342-amino-acid polypeptide reads, in one-letter code: MTKLTITRPDDWHVHLRDGDVLTDTVRDTGRYMGRAIIMPNLVPPATNVDSALAYYERIKAVCTTNFEPLMVLYLTDNTTAEDIRAAKASGKVVAAKLYPAGATTNSDSGVTDVKNIYPVLEAMQEVGMLFLVHGEVTDSSIDIFDREATFINNTLKQVVADFPSLKIVLEHITTKDAVDFVMGASDNVAATITAHHLLYNRNHMLAGGIRPHFYCLPILKRNTHQQALLAAAASGSKKFFLGTDSAPHAKDRKEAACGCAGSYTAHAAIELYAEAFESVGALDKLEAFASFNGPDFYGLPRNTDSITLVKRSWEVPATYPLGDTGVVPIRAGETIDWQVED.

Zn(2+)-binding residues include H13 and H15. Substrate-binding positions include 15 to 17 (HLR) and N41. Positions 97, 134, and 172 each coordinate Zn(2+). The residue at position 97 (K97) is an N6-carboxylysine. H134 contributes to the substrate binding site. Position 217 (L217) interacts with substrate. Residue D245 participates in Zn(2+) binding. Residue D245 is part of the active site. The substrate site is built by H249 and A261.

It belongs to the metallo-dependent hydrolases superfamily. DHOase family. Class II DHOase subfamily. As to quaternary structure, homodimer. Zn(2+) serves as cofactor.

It catalyses the reaction (S)-dihydroorotate + H2O = N-carbamoyl-L-aspartate + H(+). Its pathway is pyrimidine metabolism; UMP biosynthesis via de novo pathway; (S)-dihydroorotate from bicarbonate: step 3/3. In terms of biological role, catalyzes the reversible cyclization of carbamoyl aspartate to dihydroorotate. This Shewanella loihica (strain ATCC BAA-1088 / PV-4) protein is Dihydroorotase.